The sequence spans 260 residues: Phosphate import ATP-binding protein PstB (260 aa).

In terms of domain architecture, ABC transporter spans 14–255 (VQVKNLAFYY…PRNKQTEDYI (242 aa)). 46-53 (GPSGCGKS) contributes to the ATP binding site.

It belongs to the ABC transporter superfamily. Phosphate importer (TC 3.A.1.7) family. In terms of assembly, the complex is composed of two ATP-binding proteins (PstB), two transmembrane proteins (PstC and PstA) and a solute-binding protein (PstS).

The protein localises to the cell inner membrane. It carries out the reaction phosphate(out) + ATP + H2O = ADP + 2 phosphate(in) + H(+). Its function is as follows. Part of the ABC transporter complex PstSACB involved in phosphate import. Responsible for energy coupling to the transport system. The protein is Phosphate import ATP-binding protein PstB of Syntrophotalea carbinolica (strain DSM 2380 / NBRC 103641 / GraBd1) (Pelobacter carbinolicus).